A 638-amino-acid polypeptide reads, in one-letter code: DEAD-box ATP-dependent RNA helicase 52B (638 aa).

2 stretches are compositionally biased toward low complexity: residues 1-21 (MRSSWADSAANAEESAPAAAA) and 40-67 (GQAAPAAPAQAGALPSAAAAAQPSVGQP). A disordered region spans residues 1 to 129 (MRSSWADSAA…WDRRDREPDP (129 aa)). Over residues 79 to 112 (VNGGGGGGGGSVGGSRQGFGAGGRGGGGGGGGGA) the composition is skewed to gly residues. Basic and acidic residues predominate over residues 119–128 (GWDRRDREPD). A Q motif motif is present at residues 169 to 197 (NTFAEIDLGDALNENIRRCKYVKPTPVQR). The region spanning 200–384 (IPISIAGRDL…SDFLADYIFL (185 aa)) is the Helicase ATP-binding domain. Position 213–220 (213–220 (AQTGSGKT)) interacts with ATP. A DEAD box motif is present at residues 328–331 (DEAD). In terms of domain architecture, Helicase C-terminal spans 411 to 562 (YLMDLLHAQR…EVPQWLERYA (152 aa)). Residues 565 to 638 (SSFGGGGGRN…GGQGFSSAWD (74 aa)) form a disordered region. Positions 567 to 583 (FGGGGGRNRRSGGGARF) are enriched in gly residues. Residues 584–593 (GGRDFRRDRG) are compositionally biased toward basic and acidic residues. A compositionally biased stretch (gly residues) spans 594–632 (SGGGGYGGGGGGYGGGGYGGGGGGGGYGGGSSYGGGGQG).

The protein belongs to the DEAD box helicase family. DDX3/DED1 subfamily.

The enzyme catalyses ATP + H2O = ADP + phosphate + H(+). The chain is DEAD-box ATP-dependent RNA helicase 52B (PL10B) from Oryza sativa subsp. japonica (Rice).